We begin with the raw amino-acid sequence, 703 residues long: Polyribonucleotide nucleotidyltransferase (703 aa).

Mg(2+) contacts are provided by aspartate 488 and aspartate 494. Residues 555–614 form the KH domain; the sequence is PKIVKMQINPDKIKDVIGPGGKIITKIIDETGVKIDIEQTGEVFISGIEIDMIKKAQELI. Positions 624–692 constitute an S1 motif domain; it reads GKTYKGKVSR…EKGRVNLSRK (69 aa).

Belongs to the polyribonucleotide nucleotidyltransferase family. Requires Mg(2+) as cofactor.

It is found in the cytoplasm. It carries out the reaction RNA(n+1) + phosphate = RNA(n) + a ribonucleoside 5'-diphosphate. Its function is as follows. Involved in mRNA degradation. Catalyzes the phosphorolysis of single-stranded polyribonucleotides processively in the 3'- to 5'-direction. The protein is Polyribonucleotide nucleotidyltransferase of Clostridioides difficile (strain 630) (Peptoclostridium difficile).